Here is a 304-residue protein sequence, read N- to C-terminus: MESRGLVTAVSLTLSICSLLLLVTAIFTDHWYETDTRKHKEMCDSQGNSDPTEQKNRLMPLYQLPFRGDPSNTRRLGLLSPAPAGGVREPEDLLENWRSLLGLGVLESDCGRPLFSTYSGLWRKCYIMGIDKDIDSLIIKGIAQKCTAIKYHFSHPIRLRNIPFNLTRAIQQDEWHLLHLRRITAGFLGMAAAVLLCGCIVAAISFFWEESLTQHVAGLLFLMTGIFCTISLCTYAASVAYELNRQPKFIYGLPSDVEHGYSWSLFCAWCSLGLIVAAGCLCTAYPFISRTKILHLKFARDSCV.

Positions 1 to 25 (MESRGLVTAVSLTLSICSLLLLVTA) are cleaved as a signal peptide. The Extracellular portion of the chain corresponds to 26–186 (IFTDHWYETD…LLHLRRITAG (161 aa)). Asparagine 165 carries an N-linked (GlcNAc...) asparagine glycan. The chain crosses the membrane as a helical span at residues 187–207 (FLGMAAAVLLCGCIVAAISFF). At 208-215 (WEESLTQH) the chain is on the cytoplasmic side. The chain crosses the membrane as a helical span at residues 216-236 (VAGLLFLMTGIFCTISLCTYA). Residues 237–267 (ASVAYELNRQPKFIYGLPSDVEHGYSWSLFC) are Extracellular-facing. The chain crosses the membrane as a helical span at residues 268–288 (AWCSLGLIVAAGCLCTAYPFI). The Cytoplasmic segment spans residues 289-304 (SRTKILHLKFARDSCV).

Belongs to the TMEM178 family.

The protein resides in the endoplasmic reticulum membrane. Its function is as follows. May act as a negative regulator of osteoclast differentiation. The sequence is that of Transmembrane protein 178A (tmem178a) from Xenopus laevis (African clawed frog).